The following is a 338-amino-acid chain: MRVLGIETSCDETGIAVYDDEKGLLSHALYSQVKLHADYGGVVPELASRDHVRKIVPLIRQALADADMTIEDLDGIAYTKGPGLIGALLVGACVGRALAFSWDKPAIGVHHMEGHLLAPMLEDDVPEFPFLALLVSGGHSMLVGVEGIGRYTVLGESVDDAAGEAFDKTAKLMGLDYPGGPRLSKLAAKGVPNSYRFPRPMTDKPGLNMSFSGLKTFAANTIAAEPKDEQTRANIACAFEEAVVDTLGIKCKRALKQTGYKNLVIAGGVSANTRLRASLSEMMQGLGGKVYYPRGEFCTDNGAMIAYAGLQRLKAGQVEDLAVKGQPRWPLDTLEPVD.

Residues histidine 111 and histidine 115 each contribute to the Fe cation site. Substrate-binding positions include 134-138, aspartate 167, glycine 180, and asparagine 272; that span reads LVSGG. Aspartate 300 provides a ligand contact to Fe cation.

Belongs to the KAE1 / TsaD family. Fe(2+) is required as a cofactor.

The protein resides in the cytoplasm. It catalyses the reaction L-threonylcarbamoyladenylate + adenosine(37) in tRNA = N(6)-L-threonylcarbamoyladenosine(37) in tRNA + AMP + H(+). Functionally, required for the formation of a threonylcarbamoyl group on adenosine at position 37 (t(6)A37) in tRNAs that read codons beginning with adenine. Is involved in the transfer of the threonylcarbamoyl moiety of threonylcarbamoyl-AMP (TC-AMP) to the N6 group of A37, together with TsaE and TsaB. TsaD likely plays a direct catalytic role in this reaction. This Shewanella halifaxensis (strain HAW-EB4) protein is tRNA N6-adenosine threonylcarbamoyltransferase.